Reading from the N-terminus, the 263-residue chain is 5'-nucleotidase SurE (263 aa).

A divalent metal cation-binding residues include Asp8, Asp9, Ser43, and Asn96.

Belongs to the SurE nucleotidase family. The cofactor is a divalent metal cation.

The protein localises to the cytoplasm. It carries out the reaction a ribonucleoside 5'-phosphate + H2O = a ribonucleoside + phosphate. Nucleotidase that shows phosphatase activity on nucleoside 5'-monophosphates. The chain is 5'-nucleotidase SurE from Jannaschia sp. (strain CCS1).